The chain runs to 462 residues: Chromosomal replication initiator protein DnaA (462 aa).

Positions 1–84 (MAVSLWQQCI…RFDIGSRPSA (84 aa)) are domain I, interacts with DnaA modulators. Residues 84–125 (AKKPSVPAPIAPTRVANTQTKATVGTTFNVQAEPMANANHRS) are domain II. The domain III, AAA+ region stretch occupies residues 126 to 342 (NINPSYQFDN…GALNRVIANA (217 aa)). Residues Gly170, Gly172, Lys173, and Thr174 each coordinate ATP. The interval 343-462 (NFTGRPITID…YANLIRTLSS (120 aa)) is domain IV, binds dsDNA.

This sequence belongs to the DnaA family. As to quaternary structure, oligomerizes as a right-handed, spiral filament on DNA at oriC.

It localises to the cytoplasm. Functionally, plays an essential role in the initiation and regulation of chromosomal replication. ATP-DnaA binds to the origin of replication (oriC) to initiate formation of the DNA replication initiation complex once per cell cycle. Binds the DnaA box (a 9 base pair repeat at the origin) and separates the double-stranded (ds)DNA. Forms a right-handed helical filament on oriC DNA; dsDNA binds to the exterior of the filament while single-stranded (ss)DNA is stabiized in the filament's interior. The ATP-DnaA-oriC complex binds and stabilizes one strand of the AT-rich DNA unwinding element (DUE), permitting loading of DNA polymerase. After initiation quickly degrades to an ADP-DnaA complex that is not apt for DNA replication. Binds acidic phospholipids. This Shewanella baltica (strain OS195) protein is Chromosomal replication initiator protein DnaA.